A 1623-amino-acid polypeptide reads, in one-letter code: RING finger protein 17 (1623 aa).

Residues 1–22 (MAAEASKTGPSRSSYQRMGRKS) are disordered. The RING-type zinc-finger motif lies at 32-75 (CTRCGRRVSRSSGHHCELQCGHAFCELCLLMTEECTTIICPDCE). Residue K234 is modified to N6-acetyllysine. Tudor domains lie at 726–784 (CPVQ…FLNA), 962–1021 (KWEN…LKTM), and 1228–1285 (FWKK…PDIP). Residues 1438 to 1462 (NQSNQHSDTDDSGVSGESESESLDE) are disordered. Residues 1479-1539 (DFRTEMPCLA…CQIPSHLMRY (61 aa)) form the Tudor 4 domain.

Interacts with MXD1, MXD3, MXD4, MXI1 and PIWIL1. Self-associates. Testis specific.

Its subcellular location is the cytoplasm. The protein resides in the nucleus. Seems to be involved in regulation of transcriptional activity of MYC. In vitro, inhibits DNA-binding activity of Mad-MAX heterodimers. Can recruit Mad transcriptional repressors (MXD1, MXD3, MXD4 and MXI1) to the cytoplasm. May be involved in spermiogenesis. In Homo sapiens (Human), this protein is RING finger protein 17 (RNF17).